The following is a 620-amino-acid chain: Probably inactive leucine-rich repeat receptor-like protein kinase At5g48380 (620 aa).

Residues 1 to 27 (MMMGRLVFVIWLYNCLCLLLLSSLVDA) form the signal peptide. Residues 28 to 228 (DQANIDCLRT…SASSSRGKVV (201 aa)) lie on the Extracellular side of the membrane. Residues Asn56, Asn111, Asn119, and Asn147 are each glycosylated (N-linked (GlcNAc...) asparagine). 4 LRR repeats span residues 101–124 (DLTG…STLI), 126–148 (LVTI…ISNI), 150–172 (FLNT…LAQL), and 174–196 (RLKT…NQTL). Asn193 carries an N-linked (GlcNAc...) asparagine glycan. The chain crosses the membrane as a helical span at residues 229 to 249 (IIAAVGGLTAAALVVGVVLFF). At 250–620 (YFRKLGAVRK…DFIEELIVAR (371 aa)) the chain is on the cytoplasmic side. Position 300 is a phosphothreonine (Thr300). The Protein kinase domain occupies 303–596 (FKKDNIIATG…RAIGESYNFT (294 aa)). Residues 309-317 (IATGRTGTM) and Lys331 contribute to the ATP site. Thr463 carries the phosphothreonine modification. At Tyr479 the chain carries Phosphotyrosine. Residue Thr482 is modified to Phosphothreonine.

This sequence belongs to the protein kinase superfamily. Ser/Thr protein kinase family.

The protein resides in the cell membrane. This is Probably inactive leucine-rich repeat receptor-like protein kinase At5g48380 from Arabidopsis thaliana (Mouse-ear cress).